The sequence spans 388 residues: tRNA (guanine-N(7)-)-methyltransferase non-catalytic subunit (388 aa).

WD repeat units lie at residues V58–I102, V112–M151, G153–F194, and G196–R234. Residues E365–S388 are disordered.

The protein belongs to the WD repeat TRM82 family. As to quaternary structure, forms a heterodimer with the catalytic subunit.

It is found in the nucleus. It functions in the pathway tRNA modification; N(7)-methylguanine-tRNA biosynthesis. Functionally, required for the formation of N(7)-methylguanine at position 46 (m7G46) in tRNA. In the complex, it is required to stabilize and induce conformational changes of the catalytic subunit. The protein is tRNA (guanine-N(7)-)-methyltransferase non-catalytic subunit of Caenorhabditis elegans.